Consider the following 498-residue polypeptide: Isocitrate dehydrogenase [NADP], mitochondrial (498 aa).

NADP(+) contacts are provided by residues 164-166 and Arg-171; that span reads TIT. Position 166 (Thr-166) interacts with substrate. Residues 183 to 189, Arg-198, and Arg-221 contribute to the substrate site; that span reads SPNGTIR. A Mn(2+)-binding site is contributed by Asp-339. Lys-347 serves as a coordination point for NADP(+). Asp-362 contacts Mn(2+). NADP(+) contacts are provided by residues 397 to 402 and Asn-415; that span reads GTVTRH.

It belongs to the isocitrate and isopropylmalate dehydrogenases family. Mg(2+) is required as a cofactor. The cofactor is Mn(2+).

Its subcellular location is the mitochondrion. The enzyme catalyses D-threo-isocitrate + NADP(+) = 2-oxoglutarate + CO2 + NADPH. This chain is Isocitrate dehydrogenase [NADP], mitochondrial (icdA), found in Aspergillus niger.